We begin with the raw amino-acid sequence, 158 residues long: 6,7-dimethyl-8-ribityllumazine synthase (158 aa).

Residues F23, 61-63 (SFE), and 85-87 (AVI) contribute to the 5-amino-6-(D-ribitylamino)uracil site. 90–91 (ET) lines the (2S)-2-hydroxy-3-oxobutyl phosphate pocket. Catalysis depends on H93, which acts as the Proton donor. F118 lines the 5-amino-6-(D-ribitylamino)uracil pocket. A (2S)-2-hydroxy-3-oxobutyl phosphate-binding site is contributed by R132.

This sequence belongs to the DMRL synthase family.

It carries out the reaction (2S)-2-hydroxy-3-oxobutyl phosphate + 5-amino-6-(D-ribitylamino)uracil = 6,7-dimethyl-8-(1-D-ribityl)lumazine + phosphate + 2 H2O + H(+). Its pathway is cofactor biosynthesis; riboflavin biosynthesis; riboflavin from 2-hydroxy-3-oxobutyl phosphate and 5-amino-6-(D-ribitylamino)uracil: step 1/2. Catalyzes the formation of 6,7-dimethyl-8-ribityllumazine by condensation of 5-amino-6-(D-ribitylamino)uracil with 3,4-dihydroxy-2-butanone 4-phosphate. This is the penultimate step in the biosynthesis of riboflavin. The protein is 6,7-dimethyl-8-ribityllumazine synthase of Prochlorococcus marinus (strain MIT 9215).